Here is a 181-residue protein sequence, read N- to C-terminus: Peptide deformylase 1 (181 aa).

Fe cation-binding residues include Cys-106 and His-148. Glu-149 is a catalytic residue. His-152 is a binding site for Fe cation.

It belongs to the polypeptide deformylase family. Fe(2+) serves as cofactor.

The catalysed reaction is N-terminal N-formyl-L-methionyl-[peptide] + H2O = N-terminal L-methionyl-[peptide] + formate. Removes the formyl group from the N-terminal Met of newly synthesized proteins. Requires at least a dipeptide for an efficient rate of reaction. N-terminal L-methionine is a prerequisite for activity but the enzyme has broad specificity at other positions. In Burkholderia multivorans (strain ATCC 17616 / 249), this protein is Peptide deformylase 1.